Consider the following 206-residue polypeptide: Protein-methionine-sulfoxide reductase heme-binding subunit MsrQ (206 aa).

Helical transmembrane passes span 14–34, 45–65, 82–102, 118–138, 149–169, and 179–199; these read IKPL…WLGA, FLTR…LAIT, MCGL…VWWD, PFIT…ATST, WQVL…HFWW, and QPLL…AAWW.

This sequence belongs to the MsrQ family. As to quaternary structure, heterodimer of a catalytic subunit (MsrP) and a heme-binding subunit (MsrQ). The cofactor is FMN. Requires heme b as cofactor.

The protein localises to the cell inner membrane. Its function is as follows. Part of the MsrPQ system that repairs oxidized periplasmic proteins containing methionine sulfoxide residues (Met-O), using respiratory chain electrons. Thus protects these proteins from oxidative-stress damage caused by reactive species of oxygen and chlorine generated by the host defense mechanisms. MsrPQ is essential for the maintenance of envelope integrity under bleach stress, rescuing a wide series of structurally unrelated periplasmic proteins from methionine oxidation. MsrQ provides electrons for reduction to the reductase catalytic subunit MsrP, using the quinone pool of the respiratory chain. This Bordetella bronchiseptica (strain ATCC BAA-588 / NCTC 13252 / RB50) (Alcaligenes bronchisepticus) protein is Protein-methionine-sulfoxide reductase heme-binding subunit MsrQ.